The sequence spans 157 residues: Serine-protein kinase RsbW (157 aa).

The protein belongs to the anti-sigma-factor family.

It catalyses the reaction L-seryl-[protein] + ATP = O-phospho-L-seryl-[protein] + ADP + H(+). It carries out the reaction L-threonyl-[protein] + ATP = O-phospho-L-threonyl-[protein] + ADP + H(+). Its function is as follows. Negative regulator of sigma-B activity. Phosphorylates and inactivates its specific antagonist protein, RsbV. Upon phosphorylation of RsbV, RsbW is released and binds to sigma-B, thereby blocking its ability to form an RNA polymerase holoenzyme (E-sigma-B). The protein is Serine-protein kinase RsbW of Listeria monocytogenes serovar 1/2a (strain ATCC BAA-679 / EGD-e).